Here is a 613-residue protein sequence, read N- to C-terminus: Chitin synthase 8 (613 aa).

The tract at residues 1–73 (MAVSPTAKRK…PAPLTRPPPP (73 aa)) is disordered. Asparagine 17 carries N-linked (GlcNAc...) asparagine glycosylation. Residues 18-27 (LSRQSSSART) are compositionally biased toward polar residues. Over residues 61-73 (ESPPAPLTRPPPP) the composition is skewed to pro residues. 2 helical membrane passes run 119 to 139 (YSLILGFVSINAGFIWALWNY) and 142 to 162 (YWYIFLPFLAANTFCQVIFAI). 3 N-linked (GlcNAc...) asparagine glycosylation sites follow: asparagine 312, asparagine 421, and asparagine 471. 2 helical membrane passes run 556–576 (VTTWWLGPFVVAAMFGFAIAL) and 583–602 (IFENHIMIGLMSVLAFRYAA).

The protein belongs to the chitin synthase family.

It localises to the cell membrane. It catalyses the reaction [(1-&gt;4)-N-acetyl-beta-D-glucosaminyl](n) + UDP-N-acetyl-alpha-D-glucosamine = [(1-&gt;4)-N-acetyl-beta-D-glucosaminyl](n+1) + UDP + H(+). Polymerizes chitin, a structural polymer of the cell wall and septum, by transferring the sugar moiety of UDP-GlcNAc to the non-reducing end of the growing chitin polymer. Plays a role in cell wall integrity. Plays a key role in pathogenicity. Likely contributes to post-penetration virulence. The chain is Chitin synthase 8 from Verticillium dahliae (strain VdLs.17 / ATCC MYA-4575 / FGSC 10137) (Verticillium wilt).